The chain runs to 191 residues: MSLISRLKAVVAGDEYLDDDFDELDYPSEDELNDINNFKQNPKNSNALANSNPFDFMNNNRSSKVVGMPGISNSSSEVSLMEPRSFDEMPQAIQALRERKTVILNLTMMDPDQAQRAVDFIAGGTYAIDGHQERVGESIFLFAPSCVNVTSSSPEEASPSSVSTENTPQYSLGKNTTPEPAWGNSKLSAYS.

The span at 150–164 (TSSSPEEASPSSVST) shows a compositional bias: low complexity. Residues 150–191 (TSSSPEEASPSSVSTENTPQYSLGKNTTPEPAWGNSKLSAYS) are disordered. Positions 165–178 (ENTPQYSLGKNTTP) are enriched in polar residues.

The protein belongs to the SepF family. In terms of assembly, homodimer. Interacts with FtsZ.

The protein localises to the cytoplasm. Its function is as follows. Cell division protein that is part of the divisome complex and is recruited early to the Z-ring. Probably stimulates Z-ring formation, perhaps through the cross-linking of FtsZ protofilaments. Its function overlaps with FtsA. This Prochlorococcus marinus (strain AS9601) protein is Cell division protein SepF.